We begin with the raw amino-acid sequence, 380 residues long: Chaperone protein DnaJ (380 aa).

Positions 5–70 (DYYEILGVTK…QKRAAYDRFG (66 aa)) constitute a J domain. The CR-type zinc finger occupies 137-215 (GKAETIKIPT…CQGAGRVNRE (79 aa)). C150, C153, C167, C170, C189, C192, C203, and C206 together coordinate Zn(2+). CXXCXGXG motif repeat units follow at residues 150–157 (CEVCDGSG), 167–174 (CPTCAGYG), 189–196 (CPNCHGRG), and 203–210 (CTACQGAG).

The protein belongs to the DnaJ family. Homodimer. The cofactor is Zn(2+).

It is found in the cytoplasm. Functionally, participates actively in the response to hyperosmotic and heat shock by preventing the aggregation of stress-denatured proteins and by disaggregating proteins, also in an autonomous, DnaK-independent fashion. Unfolded proteins bind initially to DnaJ; upon interaction with the DnaJ-bound protein, DnaK hydrolyzes its bound ATP, resulting in the formation of a stable complex. GrpE releases ADP from DnaK; ATP binding to DnaK triggers the release of the substrate protein, thus completing the reaction cycle. Several rounds of ATP-dependent interactions between DnaJ, DnaK and GrpE are required for fully efficient folding. Also involved, together with DnaK and GrpE, in the DNA replication of plasmids through activation of initiation proteins. This chain is Chaperone protein DnaJ, found in Methylobacterium radiotolerans (strain ATCC 27329 / DSM 1819 / JCM 2831 / NBRC 15690 / NCIMB 10815 / 0-1).